A 444-amino-acid polypeptide reads, in one-letter code: Ribosomal protein uS12 methylthiotransferase RimO (444 aa).

Residues 4–118 (YKIGLISLGC…IQNYIDDFFN (115 aa)) form the MTTase N-terminal domain. Positions 13, 48, 81, 155, 159, and 162 each coordinate [4Fe-4S] cluster. Positions 141 to 371 (TTAKHMAYIR…MSIQQNVSSK (231 aa)) constitute a Radical SAM core domain. The 67-residue stretch at 374–440 (KNKLEKVYKV…EYDLIGVVCD (67 aa)) folds into the TRAM domain.

This sequence belongs to the methylthiotransferase family. RimO subfamily. It depends on [4Fe-4S] cluster as a cofactor.

Its subcellular location is the cytoplasm. The catalysed reaction is L-aspartate(89)-[ribosomal protein uS12]-hydrogen + (sulfur carrier)-SH + AH2 + 2 S-adenosyl-L-methionine = 3-methylsulfanyl-L-aspartate(89)-[ribosomal protein uS12]-hydrogen + (sulfur carrier)-H + 5'-deoxyadenosine + L-methionine + A + S-adenosyl-L-homocysteine + 2 H(+). Functionally, catalyzes the methylthiolation of an aspartic acid residue of ribosomal protein uS12. This chain is Ribosomal protein uS12 methylthiotransferase RimO, found in Clostridium novyi (strain NT).